The following is a 357-amino-acid chain: F-box only protein 25 (357 aa).

The segment at 1 to 83 is interaction with beta-actin; it reads MPFLGQDWRS…DTAAHSFYRE (83 aa). The F-box domain maps to 225 to 273; the sequence is LTLSDLPLHMLNNILYRFSDGWDIVTLGQVTPTLYMLSEDRRLWKRLCQ.

Part of a SCF (SKP1-cullin-F-box) protein ligase complex consisting of FBXO25, SKP1, CUL1 and RBX1. Interacts directly with SKP1 and CUL1. Interacts (via C-terminus) with beta-actin (via N-terminus). In terms of tissue distribution, expressed in all tissues tested, except striated muscle (at protein level). Expressed predominantly in the cerebral cortex, the hippocampus and the Purkinje cell layer of the brain. Intestine and kidney show also significant levels.

It localises to the nucleus. The protein operates within protein modification; protein ubiquitination. In terms of biological role, substrate-recognition component of the SCF (SKP1-CUL1-F-box protein)-type E3 ubiquitin ligase complex. May play a role in accumulation of expanded polyglutamine (polyQ) protein huntingtin (HTT). This Mus musculus (Mouse) protein is F-box only protein 25 (Fbxo25).